Reading from the N-terminus, the 785-residue chain is Endonuclease MutS2 (785 aa).

332-339 (GPNTGGKT) contributes to the ATP binding site. Residues 710 to 785 (VDLRGMDSEE…GNGVTVVELK (76 aa)) enclose the Smr domain.

This sequence belongs to the DNA mismatch repair MutS family. MutS2 subfamily. In terms of assembly, homodimer. Binds to stalled ribosomes, contacting rRNA.

Functionally, endonuclease that is involved in the suppression of homologous recombination and thus may have a key role in the control of bacterial genetic diversity. Acts as a ribosome collision sensor, splitting the ribosome into its 2 subunits. Detects stalled/collided 70S ribosomes which it binds and splits by an ATP-hydrolysis driven conformational change. Acts upstream of the ribosome quality control system (RQC), a ribosome-associated complex that mediates the extraction of incompletely synthesized nascent chains from stalled ribosomes and their subsequent degradation. Probably generates substrates for RQC. This chain is Endonuclease MutS2, found in Clostridium novyi (strain NT).